Here is a 116-residue protein sequence, read N- to C-terminus: Staphylococcal complement inhibitor (116 aa).

The signal sequence occupies residues 1–31; sequence MKIRKSILAGTLAIVLASPLVTNLDKNEAQA. Positions 62-79 are essential for activity; that stretch reads LATGSLNTYYKRTIKISG.

Belongs to the SCIN family.

The protein localises to the secreted. Involved in countering the first line of host defense mechanisms. Efficiently inhibits opsonization, phagocytosis and killing of S.aureus by human neutrophils. Acts by binding and stabilizing human C3 convertases (C4b2a and C3bBb), leading to their inactivation. The convertases are no longer able to cleave complement C3, therefore preventing further C3b deposition on the bacterial surface and phagocytosis of the bacterium. Also prevents C5a-induced neutrophil responses. In Staphylococcus aureus (strain Mu50 / ATCC 700699), this protein is Staphylococcal complement inhibitor (scn).